The following is a 223-amino-acid chain: MGCASSKEEVALTPLSDVNAAKEVADLKAQVDQLKRQLASAGQSAAPAAAGAVKGGVVETLFFPDEKLPCRNNRRPGGCKRQHCEYSHTPTSLSRFLDYLGSATRTLDICVFTITNDDISDVVLELHNKGVRVRIISDNDQAHTQGSDIDKFRQAGIAVRQDKTAAHMHHKFAIIDGRLLLNGSFNWTRQAVTANNENVTVLSDPKLIASFQQQFDKLWDMFK.

Over 1 to 6 the chain is Mitochondrial intermembrane; it reads MGCASS. A helical membrane pass occupies residues 7–24; that stretch reads KEEVALTPLSDVNAAKEV. Over 25–223 the chain is Cytoplasmic; it reads ADLKAQVDQL…QFDKLWDMFK (199 aa). Positions 164-191 constitute a PLD phosphodiesterase domain; the sequence is TAAHMHHKFAIIDGRLLLNGSFNWTRQA. Residues histidine 169, lysine 171, and aspartate 176 contribute to the active site.

This sequence belongs to the phospholipase D family. MitoPLD/Zucchini subfamily. In terms of assembly, homodimer.

The protein resides in the mitochondrion outer membrane. Its function is as follows. Plays a critical role in PIWI-interacting RNA (piRNA) biogenesis. piRNAs provide essential protection against the activity of mobile genetic elements. piRNA-mediated transposon silencing is thus critical for maintaining genome stability. Backbone-non-specific, single strand-specific nuclease, cleaving either RNA or DNA substrates with similar affinity. Produces 5' phosphate and 3' hydroxyl termini, suggesting it could directly participate in the processing of primary piRNA transcripts. Has been proposed to act as a cardiolipin hydrolase to generate phosphatidic acid at mitochondrial surface. Although it cannot be excluded that it can act as a phospholipase in some circumstances, this activity could not be confirmed. This is Mitochondrial cardiolipin hydrolase from Chlamydomonas reinhardtii (Chlamydomonas smithii).